The sequence spans 626 residues: ATP-dependent zinc metalloprotease FtsH (626 aa).

Residues 1 to 7 (MNGNRPN) are Cytoplasmic-facing. Residues 8 to 28 (YISLIFAALVILSLFWLVRSF) traverse the membrane as a helical segment. Residues 29–108 (YFDTSAPSKM…VTGEKGVSSS (80 aa)) lie on the Periplasmic side of the membrane. A helical transmembrane segment spans residues 109 to 129 (FWVNVIGNVIFIGFLLFMFFF). Residues 130–626 (MMRTISGRNN…RAAAGSEQDS (497 aa)) lie on the Cytoplasmic side of the membrane. Residue 202-209 (GPPGTGKT) coordinates ATP. H424 contributes to the Zn(2+) binding site. The active site involves E425. H428 and D501 together coordinate Zn(2+).

It in the central section; belongs to the AAA ATPase family. This sequence in the C-terminal section; belongs to the peptidase M41 family. Homohexamer. Zn(2+) is required as a cofactor.

Its subcellular location is the cell inner membrane. Acts as a processive, ATP-dependent zinc metallopeptidase for both cytoplasmic and membrane proteins. Plays a role in the quality control of integral membrane proteins. The protein is ATP-dependent zinc metalloprotease FtsH of Pseudothermotoga lettingae (strain ATCC BAA-301 / DSM 14385 / NBRC 107922 / TMO) (Thermotoga lettingae).